Consider the following 78-residue polypeptide: Translational regulator CsrA (78 aa).

This sequence belongs to the CsrA/RsmA family. As to quaternary structure, homodimer; the beta-strands of each monomer intercalate to form a hydrophobic core, while the alpha-helices form wings that extend away from the core.

The protein localises to the cytoplasm. Its function is as follows. A translational regulator that binds mRNA to regulate translation initiation and/or mRNA stability. Usually binds in the 5'-UTR at or near the Shine-Dalgarno sequence preventing ribosome-binding, thus repressing translation. Its main target seems to be the major flagellin gene, while its function is anatagonized by FliW. This is Translational regulator CsrA from Borrelia recurrentis (strain A1).